Here is a 532-residue protein sequence, read N- to C-terminus: E3 ubiquitin-protein ligase ICP0 (532 aa).

Cysteine 8, cysteine 11, cysteine 24, histidine 26, cysteine 29, cysteine 32, cysteine 43, and cysteine 46 together coordinate Zn(2+). The RING-type zinc-finger motif lies at 8–47; it reads CPICLEDPSNYSMALPCLHAFCYVCITRWIRQNPTCPLCK. Disordered regions lie at residues 206–391, 406–426, 461–498, and 510–532; these read EYID…PMRP, APRDSSTSEAAGPSRLGAGPR, EDESARRRGNVLLRPRRQSVPPVPYPDIASTSPLIRQG, and QTQPAEPEEMRCPHNCQRYRRNQ. 2 stretches are compositionally biased toward acidic residues: residues 217–227 and 234–243; these read SEEETDSDIEV and DPEDTSDETS. Residues 286 to 295 are compositionally biased toward basic residues; sequence RSARLRRRQP.

Auto-ubiquitinated.

The catalysed reaction is S-ubiquitinyl-[E2 ubiquitin-conjugating enzyme]-L-cysteine + [acceptor protein]-L-lysine = [E2 ubiquitin-conjugating enzyme]-L-cysteine + N(6)-ubiquitinyl-[acceptor protein]-L-lysine.. In terms of biological role, evades nuclear antiviral defenses triggered by dsDNA viruses. Acts during the initial stages of lytic infection and the reactivation of latent viral genome. Prevents the antiviral effect of nuclear bodies by degrading host PML and SP100. This is E3 ubiquitin-protein ligase ICP0 (63) from Equus caballus (Horse).